The following is a 149-amino-acid chain: Ribonuclease P protein component (149 aa).

The tract at residues 123–149 is disordered; it reads GTKVSRRSNGALHDAAPSSQPDPTVSG. Positions 139–149 are enriched in polar residues; the sequence is PSSQPDPTVSG.

This sequence belongs to the RnpA family. In terms of assembly, consists of a catalytic RNA component (M1 or rnpB) and a protein subunit.

The catalysed reaction is Endonucleolytic cleavage of RNA, removing 5'-extranucleotides from tRNA precursor.. Its function is as follows. RNaseP catalyzes the removal of the 5'-leader sequence from pre-tRNA to produce the mature 5'-terminus. It can also cleave other RNA substrates such as 4.5S RNA. The protein component plays an auxiliary but essential role in vivo by binding to the 5'-leader sequence and broadening the substrate specificity of the ribozyme. The protein is Ribonuclease P protein component of Caulobacter vibrioides (strain ATCC 19089 / CIP 103742 / CB 15) (Caulobacter crescentus).